Here is a 701-residue protein sequence, read N- to C-terminus: Transcription factor PDR8 (701 aa).

Residues 1-22 form a disordered region; it reads MDGSHFPMKSTTGEPVSSGKKG. A DNA-binding region (zn(2)-C6 fungal-type) is located at residues 31–59; that stretch reads CAFCRKRKLKCSQARPMCQQCVIRKLPQC.

It is found in the cytoplasm. It localises to the nucleus. Up-regulates the transcription of the genes for ATP-binding cassette (ABC) transporters YOR1 and PDR15, for major facilitator superfamily transporter AZR1, for pleiotropic drug resistance SNG1, for alpha-glucosidase YJL216C and for YLL056C. This is Transcription factor PDR8 (PDR8) from Saccharomyces cerevisiae (strain ATCC 204508 / S288c) (Baker's yeast).